The primary structure comprises 261 residues: Receptor expression-enhancing protein 4 (261 aa).

The next 2 membrane-spanning stretches (helical) occupy residues 1 to 21 (MVSWIISRAVVLVFGLLYPAY) and 35 to 55 (YVRWMMYWIVFALFMTVETFT). Residues 167-261 (YTDALYPDEP…KKPAQSEPEN (95 aa)) form a disordered region. Over residues 221 to 230 (KSLQRSQSLR) the composition is skewed to polar residues.

This sequence belongs to the DP1 family. As to quaternary structure, interacts with microtubules. During gastrulation, expressed on the dorsal side of the embryo and then in the neural plate and neural tube. At tailbud stages, expressed in the somites, neural tube and otic vesicle.

The protein localises to the endoplasmic reticulum membrane. Functionally, microtubule-binding protein required to ensure proper cell division and nuclear envelope reassembly by sequestering the endoplasmic reticulum away from chromosomes during mitosis. Probably acts by clearing the endoplasmic reticulum membrane from metaphase chromosomes. May play a role in the maintenance of both the nervous system and the musculature. The polypeptide is Receptor expression-enhancing protein 4 (reep4) (Xenopus laevis (African clawed frog)).